A 317-amino-acid chain; its full sequence is MSKTLKESVIAVIYGGRSAEREVSLQSGPLVAEGLRAKGYQVVELDLYGSNAALDPIVQLQSIEFDLAFIALHGGEGEDGRVQALLEMFGKPYTGSSPLACGLAMDKVLTKRFWNGIGIPTPAYLSFVDHANADLIEEQMSYPVIVKPSREGSTIGINKAMNRAELDDALIKALEYDSDILVEEFIDGPEFTVTVIDDVAYPPIGLKPAPDHKLYDYEAKYIADDTEYLLPCGLDEDDENELQMLALDAYRSLGCFGWGRVDVMRDQAGVFWVLEVNTAPGMTSHSLVPMAAKYVGIDYASLVEKIAQNAWDKVGRN.

The region spanning 111 to 308 is the ATP-grasp domain; it reads KRFWNGIGIP…YASLVEKIAQ (198 aa). Residue 137–192 participates in ATP binding; that stretch reads EEQMSYPVIVKPSREGSTIGINKAMNRAELDDALIKALEYDSDILVEEFIDGPEFT. Mg(2+)-binding residues include aspartate 262, glutamate 275, and asparagine 277.

The protein belongs to the D-alanine--D-alanine ligase family. Mg(2+) is required as a cofactor. Requires Mn(2+) as cofactor.

The protein resides in the cytoplasm. It catalyses the reaction 2 D-alanine + ATP = D-alanyl-D-alanine + ADP + phosphate + H(+). It functions in the pathway cell wall biogenesis; peptidoglycan biosynthesis. Functionally, cell wall formation. The polypeptide is D-alanine--D-alanine ligase (Marinomonas sp. (strain MWYL1)).